A 506-amino-acid chain; its full sequence is Nucleosome assembly protein 1-like 3 (506 aa).

2 disordered regions span residues Met-1–Asn-95 and Pro-157–Asp-307. Over residues Ser-35 to Ser-70 the composition is skewed to low complexity. Acidic residues predominate over residues Pro-157–Gln-178. Residues Pro-196 to Lys-296 show a composition bias toward basic and acidic residues.

The protein belongs to the nucleosome assembly protein (NAP) family.

Its subcellular location is the nucleus. This Homo sapiens (Human) protein is Nucleosome assembly protein 1-like 3 (NAP1L3).